Consider the following 388-residue polypeptide: S-adenosylmethionine synthase (388 aa).

His-16 is an ATP binding site. Position 18 (Asp-18) interacts with Mg(2+). Residue Glu-44 coordinates K(+). Residues Glu-57 and Gln-100 each coordinate L-methionine. The tract at residues 100 to 110 is flexible loop; it reads QSPDIAQGVNE. ATP contacts are provided by residues 167–169, 233–234, Asp-242, 248–249, and Lys-269; these read DGK, RF, and RK. Asp-242 contributes to the L-methionine binding site. Lys-273 is an L-methionine binding site.

It belongs to the AdoMet synthase family. Homotetramer; dimer of dimers. It depends on Mg(2+) as a cofactor. K(+) serves as cofactor.

It localises to the cytoplasm. It carries out the reaction L-methionine + ATP + H2O = S-adenosyl-L-methionine + phosphate + diphosphate. It functions in the pathway amino-acid biosynthesis; S-adenosyl-L-methionine biosynthesis; S-adenosyl-L-methionine from L-methionine: step 1/1. In terms of biological role, catalyzes the formation of S-adenosylmethionine (AdoMet) from methionine and ATP. The overall synthetic reaction is composed of two sequential steps, AdoMet formation and the subsequent tripolyphosphate hydrolysis which occurs prior to release of AdoMet from the enzyme. The sequence is that of S-adenosylmethionine synthase from Desulfosudis oleivorans (strain DSM 6200 / JCM 39069 / Hxd3) (Desulfococcus oleovorans).